The chain runs to 264 residues: Thymidylate synthase (264 aa).

Position 21 (Arg-21) interacts with dUMP. A (6R)-5,10-methylene-5,6,7,8-tetrahydrofolate-binding site is contributed by His-51. 126–127 lines the dUMP pocket; sequence RR. Cys-146 acts as the Nucleophile in catalysis. DUMP-binding positions include 166–169, Asn-177, and 207–209; these read RSAD and HLY. Residue Asp-169 coordinates (6R)-5,10-methylene-5,6,7,8-tetrahydrofolate. Residue Ser-263 participates in (6R)-5,10-methylene-5,6,7,8-tetrahydrofolate binding.

The protein belongs to the thymidylate synthase family. Bacterial-type ThyA subfamily. As to quaternary structure, homodimer.

The protein localises to the cytoplasm. The enzyme catalyses dUMP + (6R)-5,10-methylene-5,6,7,8-tetrahydrofolate = 7,8-dihydrofolate + dTMP. The protein operates within pyrimidine metabolism; dTTP biosynthesis. Catalyzes the reductive methylation of 2'-deoxyuridine-5'-monophosphate (dUMP) to 2'-deoxythymidine-5'-monophosphate (dTMP) while utilizing 5,10-methylenetetrahydrofolate (mTHF) as the methyl donor and reductant in the reaction, yielding dihydrofolate (DHF) as a by-product. This enzymatic reaction provides an intracellular de novo source of dTMP, an essential precursor for DNA biosynthesis. The protein is Thymidylate synthase of Laribacter hongkongensis (strain HLHK9).